Reading from the N-terminus, the 686-residue chain is Methionine--tRNA ligase (686 aa).

Positions 15-25 match the 'HIGH' region motif; sequence PYANGSIHLGH. Zn(2+) contacts are provided by Cys-146, Cys-149, Cys-159, and Cys-162. The 'KMSKS' region signature appears at 332–336; the sequence is KMSKS. Lys-335 contacts ATP. The 102-residue stretch at 585-686 folds into the tRNA-binding domain; sequence AFEAVDMRIA…EGAQPGMRVM (102 aa).

It belongs to the class-I aminoacyl-tRNA synthetase family. MetG type 1 subfamily. As to quaternary structure, homodimer. Requires Zn(2+) as cofactor.

It localises to the cytoplasm. The catalysed reaction is tRNA(Met) + L-methionine + ATP = L-methionyl-tRNA(Met) + AMP + diphosphate. In terms of biological role, is required not only for elongation of protein synthesis but also for the initiation of all mRNA translation through initiator tRNA(fMet) aminoacylation. This is Methionine--tRNA ligase from Aliivibrio fischeri (strain MJ11) (Vibrio fischeri).